Reading from the N-terminus, the 256-residue chain is 3-hydroxy-5-phosphonooxypentane-2,4-dione thiolase (256 aa).

The active-site Schiff-base intermediate with substrate is the K168.

It belongs to the DeoC/FbaB aldolase family. Homodecamer.

The protein localises to the cytoplasm. It catalyses the reaction dihydroxyacetone phosphate + acetyl-CoA = 3-hydroxy-2,4-dioxopentyl phosphate + CoA. Involved in the degradation of phospho-AI-2, thereby terminating induction of the lsr operon and closing the AI-2 signaling cycle. Catalyzes the transfer of an acetyl moiety from 3-hydroxy-5-phosphonooxypentane-2,4-dione to CoA to form glycerone phosphate and acetyl-CoA. This Shigella flexneri protein is 3-hydroxy-5-phosphonooxypentane-2,4-dione thiolase (lsrF).